A 125-amino-acid chain; its full sequence is Succinate dehydrogenase assembly factor 3, mitochondrial (125 aa).

The N-terminal 30 residues, 1–30, are a transit peptide targeting the mitochondrion; that stretch reads MPGRHVSRVRALYKRVLQLHRVLPPDLKSL.

This sequence belongs to the complex I LYR family. SDHAF3 subfamily. As to quaternary structure, interacts with SDHB within an SDHA-SDHB subcomplex.

It localises to the mitochondrion matrix. Plays an essential role in the assembly of succinate dehydrogenase (SDH), an enzyme complex (also referred to as respiratory complex II) that is a component of both the tricarboxylic acid (TCA) cycle and the mitochondrial electron transport chain, and which couples the oxidation of succinate to fumarate with the reduction of ubiquinone (coenzyme Q) to ubiquinol. Promotes maturation of the iron-sulfur protein subunit SDHB of the SDH catalytic dimer, protecting it from the deleterious effects of oxidants. May act together with SDHAF1. This is Succinate dehydrogenase assembly factor 3, mitochondrial from Homo sapiens (Human).